A 273-amino-acid chain; its full sequence is Dermonecrotic toxin LdSicTox-alphaIB1bii (273 aa).

Histidine 5 is an active-site residue. Mg(2+) contacts are provided by glutamate 25 and aspartate 27. The active-site Nucleophile is the histidine 41. 2 disulfides stabilise this stretch: cysteine 45-cysteine 51 and cysteine 47-cysteine 190. Aspartate 85 is a binding site for Mg(2+). Asparagine 250 carries N-linked (GlcNAc...) asparagine glycosylation.

It belongs to the arthropod phospholipase D family. Class II subfamily. Requires Mg(2+) as cofactor. Expressed by the venom gland.

It is found in the secreted. The enzyme catalyses an N-(acyl)-sphingosylphosphocholine = an N-(acyl)-sphingosyl-1,3-cyclic phosphate + choline. The catalysed reaction is an N-(acyl)-sphingosylphosphoethanolamine = an N-(acyl)-sphingosyl-1,3-cyclic phosphate + ethanolamine. It catalyses the reaction a 1-acyl-sn-glycero-3-phosphocholine = a 1-acyl-sn-glycero-2,3-cyclic phosphate + choline. It carries out the reaction a 1-acyl-sn-glycero-3-phosphoethanolamine = a 1-acyl-sn-glycero-2,3-cyclic phosphate + ethanolamine. Dermonecrotic toxins cleave the phosphodiester linkage between the phosphate and headgroup of certain phospholipids (sphingolipid and lysolipid substrates), forming an alcohol (often choline) and a cyclic phosphate. This toxin acts on sphingomyelin (SM). It may also act on ceramide phosphoethanolamine (CPE), lysophosphatidylcholine (LPC) and lysophosphatidylethanolamine (LPE), but not on lysophosphatidylserine (LPS), and lysophosphatidylglycerol (LPG). It acts by transphosphatidylation, releasing exclusively cyclic phosphate products as second products. Induces dermonecrosis, hemolysis, increased vascular permeability, edema, inflammatory response, and platelet aggregation. The chain is Dermonecrotic toxin LdSicTox-alphaIB1bii from Loxosceles deserta (Desert recluse spider).